The chain runs to 142 residues: 3-hydroxyacyl-[acyl-carrier-protein] dehydratase FabZ (142 aa).

Histidine 47 is a catalytic residue.

It belongs to the thioester dehydratase family. FabZ subfamily.

It localises to the cytoplasm. It catalyses the reaction a (3R)-hydroxyacyl-[ACP] = a (2E)-enoyl-[ACP] + H2O. Its function is as follows. Involved in unsaturated fatty acids biosynthesis. Catalyzes the dehydration of short chain beta-hydroxyacyl-ACPs and long chain saturated and unsaturated beta-hydroxyacyl-ACPs. This Thermoanaerobacter sp. (strain X514) protein is 3-hydroxyacyl-[acyl-carrier-protein] dehydratase FabZ.